Here is a 663-residue protein sequence, read N- to C-terminus: Zinc finger protein GLI2 (663 aa).

Positions 159 to 186 are disordered; the sequence is ISSNSNCISDSSQSKQSSESAVSSTVNP. The span at 160–182 shows a compositional bias: low complexity; that stretch reads SSNSNCISDSSQSKQSSESAVSS. 5 C2H2-type zinc fingers span residues 234–259, 267–294, 300–324, 330–355, and 361–386; these read TNCH…NNDH, FVCR…MRRH, HKCT…LRSH, YVCE…NRTH, and YVCK…KTVH. 4 disordered regions span residues 374 to 440, 452 to 481, 544 to 578, and 619 to 663; these read DPSS…MEDC, VMCQ…DSGV, CSWV…SRTL, and SGIS…DIKL. Residues 386-402 show a composition bias toward basic and acidic residues; sequence HGPDAHVTKKQRNDVHP. Over residues 456-473 the composition is skewed to low complexity; that stretch reads SSPGGQSSCSSEPSPLGS. Polar residues-rich tracts occupy residues 563 to 578 and 619 to 647; these read GNGS…SRTL and SGIS…SSAD.

It belongs to the GLI C2H2-type zinc-finger protein family.

The protein resides in the nucleus. The protein localises to the cytoplasm. Its subcellular location is the cell projection. It is found in the cilium. Functions as a transcription regulator in the hedgehog (Hh) pathway. Functions as a transcriptional activator. May also function as transcriptional repressor. Binds to the DNA sequence 5'-GAACCACCCA-3'. Is involved in the smoothened (SHH) signaling pathway. Required for normal skeleton development. The protein is Zinc finger protein GLI2 of Gallus gallus (Chicken).